The chain runs to 598 residues: Inactive metallocarboxypeptidase ECM14 (598 aa).

The first 21 residues, 1-21 (MRLFTHGQVLALLAFVNTISA), serve as a signal peptide directing secretion. The propeptide occupies 22 to 174 (IPSFSTNSYP…QTIYESYPSP (153 aa)). A Peptidase M14 domain is found at 202-522 (NYQPLSVIVP…NAVMMLGRFL (321 aa)). Residues H264 and E267 each coordinate Zn(2+). Substrate-binding positions include 264-267 (HARE), R322, and 339-340 (DR). C333 and C356 form a disulfide bridge. An N-linked (GlcNAc...) asparagine glycan is attached at N349. H396 provides a ligand contact to Zn(2+). Substrate is bound at residue 397 to 398 (SY). The segment at 539–598 (QRPNKDDKPILNDDDDDDDADTNDDGIGRKDDSWIPDEYKGDNDRDESDGGWAFRRLRKR) is disordered. A compositionally biased stretch (acidic residues) spans 550–562 (NDDDDDDDADTND). Over residues 564 to 581 (GIGRKDDSWIPDEYKGDN) the composition is skewed to basic and acidic residues.

It belongs to the peptidase M14 family. It depends on Zn(2+) as a cofactor.

The protein localises to the vacuole. The protein resides in the secreted. Functionally, inactive carboxypeptidase that may play a role in cell wall organization and biogenesis. The sequence is that of Inactive metallocarboxypeptidase ECM14 (ECM14) from Ajellomyces capsulatus (strain H143) (Darling's disease fungus).